The following is a 359-amino-acid chain: Aspartate carbamoyltransferase catalytic subunit (359 aa).

2 residues coordinate carbamoyl phosphate: Arg-52 and Thr-53. Lys-81 contributes to the L-aspartate binding site. The carbamoyl phosphate site is built by Arg-102, His-130, and Gln-133. Positions 163 and 224 each coordinate L-aspartate. The carbamoyl phosphate site is built by Leu-264 and Pro-265.

Belongs to the aspartate/ornithine carbamoyltransferase superfamily. ATCase family. In terms of assembly, heterododecamer (2C3:3R2) of six catalytic PyrB chains organized as two trimers (C3), and six regulatory PyrI chains organized as three dimers (R2).

The enzyme catalyses carbamoyl phosphate + L-aspartate = N-carbamoyl-L-aspartate + phosphate + H(+). The protein operates within pyrimidine metabolism; UMP biosynthesis via de novo pathway; (S)-dihydroorotate from bicarbonate: step 2/3. In terms of biological role, catalyzes the condensation of carbamoyl phosphate and aspartate to form carbamoyl aspartate and inorganic phosphate, the committed step in the de novo pyrimidine nucleotide biosynthesis pathway. This is Aspartate carbamoyltransferase catalytic subunit from Brachyspira hyodysenteriae (strain ATCC 49526 / WA1).